A 250-amino-acid polypeptide reads, in one-letter code: NADH-quinone oxidoreductase subunit C (250 aa).

It belongs to the complex I 30 kDa subunit family. In terms of assembly, NDH-1 is composed of 14 different subunits. Subunits NuoB, C, D, E, F, and G constitute the peripheral sector of the complex.

It is found in the cell inner membrane. It catalyses the reaction a quinone + NADH + 5 H(+)(in) = a quinol + NAD(+) + 4 H(+)(out). In terms of biological role, NDH-1 shuttles electrons from NADH, via FMN and iron-sulfur (Fe-S) centers, to quinones in the respiratory chain. The immediate electron acceptor for the enzyme in this species is believed to be ubiquinone. Couples the redox reaction to proton translocation (for every two electrons transferred, four hydrogen ions are translocated across the cytoplasmic membrane), and thus conserves the redox energy in a proton gradient. The sequence is that of NADH-quinone oxidoreductase subunit C from Xanthomonas oryzae pv. oryzae (strain PXO99A).